The chain runs to 254 residues: MGQKVNPTGFRLGIIKDWTSRWYDDGPVIAEKIKQDQVIRNYISARLKKEKAGVSKVVIERTTKHIKINIYAARPGAVVGRKGEEINNLSQELTRITGREVKIDVIEVIKPEIEAQLIGENIAYQLENRVSFRRAMKQAIQQAMRAGAEGIRIRCAGRLGGVEIARSEQYKEGKIPLHTLRANVDYASVTAHTIAGAIGIKVWVYKGEVLVQRLDAIEEEEMKKMQERRNDSRGRGRGDGRGAKRRRRPAAKKA.

A KH type-2 domain is found at 39 to 109 (IRNYISARLK…EVKIDVIEVI (71 aa)). Residues 220–254 (EEMKKMQERRNDSRGRGRGDGRGAKRRRRPAAKKA) are disordered. A compositionally biased stretch (basic and acidic residues) spans 221-242 (EMKKMQERRNDSRGRGRGDGRG). Residues 243-254 (AKRRRRPAAKKA) show a composition bias toward basic residues.

The protein belongs to the universal ribosomal protein uS3 family. Part of the 30S ribosomal subunit. Forms a tight complex with proteins S10 and S14.

In terms of biological role, binds the lower part of the 30S subunit head. Binds mRNA in the 70S ribosome, positioning it for translation. This chain is Small ribosomal subunit protein uS3, found in Chlorobaculum parvum (strain DSM 263 / NCIMB 8327) (Chlorobium vibrioforme subsp. thiosulfatophilum).